We begin with the raw amino-acid sequence, 814 residues long: Threonine--tRNA ligase 2, cytoplasmic (814 aa).

Residues 2–72 (AAHIAQRLTV…SLREEQERAR (71 aa)) adopt a coiled-coil conformation. Residues 62–142 (RSLREEQERA…GHKQEGPCAP (81 aa)) are disordered. Composition is skewed to basic and acidic residues over residues 63-72 (SLREEQERAR), 88-102 (EEPKQQNNKAKEKGQ), and 119-137 (GNKKNEKKAGKEVDGHKQE). The TGS domain maps to 172–234 (KPIKITLADG…EQDSNVELLK (63 aa)). The Nuclear localization signal motif lies at 798-804 (KLKTLKK).

It belongs to the class-II aminoacyl-tRNA synthetase family.

It localises to the cytoplasm. The protein localises to the nucleus. It carries out the reaction tRNA(Thr) + L-threonine + ATP = L-threonyl-tRNA(Thr) + AMP + diphosphate + H(+). In terms of biological role, catalyzes the attachment of threonine to tRNA(Thr) in a two-step reaction: threonine is first activated by ATP to form Thr-AMP and then transferred to the acceptor end of tRNA(Thr). Also edits incorrectly charged tRNA(Thr) via its editing domain, at the post-transfer stage. The polypeptide is Threonine--tRNA ligase 2, cytoplasmic (tars3) (Xenopus tropicalis (Western clawed frog)).